The chain runs to 362 residues: GDSL esterase/lipase At5g18430 (362 aa).

An N-terminal signal peptide occupies residues 1-19 (MTISTVIAFMSMFLVFVMS). The Nucleophile role is filled by Ser35. Asn117 is a glycosylation site (N-linked (GlcNAc...) asparagine). Residues Asp327 and His330 contribute to the active site. Asn355 is a glycosylation site (N-linked (GlcNAc...) asparagine).

Belongs to the 'GDSL' lipolytic enzyme family.

It is found in the secreted. The sequence is that of GDSL esterase/lipase At5g18430 from Arabidopsis thaliana (Mouse-ear cress).